The primary structure comprises 229 residues: NAD(P)H-hydrate epimerase (229 aa).

One can recognise a YjeF N-terminal domain in the interval 11-222 (YAAADIRAAE…DVGLDLSGAT (212 aa)). (6S)-NADPHX is bound at residue 59–63 (NNGGD). K(+)-binding residues include asparagine 60 and aspartate 124. Residues 128–136 (GIGTTASPA) and aspartate 164 each bind (6S)-NADPHX. Serine 167 contributes to the K(+) binding site.

Belongs to the NnrE/AIBP family. K(+) serves as cofactor.

It carries out the reaction (6R)-NADHX = (6S)-NADHX. The catalysed reaction is (6R)-NADPHX = (6S)-NADPHX. In terms of biological role, catalyzes the epimerization of the S- and R-forms of NAD(P)HX, a damaged form of NAD(P)H that is a result of enzymatic or heat-dependent hydration. This is a prerequisite for the S-specific NAD(P)H-hydrate dehydratase to allow the repair of both epimers of NAD(P)HX. This is NAD(P)H-hydrate epimerase from Clavibacter sepedonicus (Clavibacter michiganensis subsp. sepedonicus).